The primary structure comprises 309 residues: Porphobilinogen deaminase (309 aa).

Cysteine 234 bears the S-(dipyrrolylmethanemethyl)cysteine mark.

Belongs to the HMBS family. In terms of assembly, monomer. Dipyrromethane is required as a cofactor.

It carries out the reaction 4 porphobilinogen + H2O = hydroxymethylbilane + 4 NH4(+). It functions in the pathway porphyrin-containing compound metabolism; protoporphyrin-IX biosynthesis; coproporphyrinogen-III from 5-aminolevulinate: step 2/4. In terms of biological role, tetrapolymerization of the monopyrrole PBG into the hydroxymethylbilane pre-uroporphyrinogen in several discrete steps. This Mycobacterium bovis (strain ATCC BAA-935 / AF2122/97) protein is Porphobilinogen deaminase (hemC).